The primary structure comprises 203 residues: Superoxide dismutase [Mn] (203 aa).

Mn(2+) is bound by residues H27, H81, D164, and H168.

Belongs to the iron/manganese superoxide dismutase family. Homodimer. It depends on Mn(2+) as a cofactor.

The enzyme catalyses 2 superoxide + 2 H(+) = H2O2 + O2. Its function is as follows. Destroys superoxide anion radicals which are normally produced within the cells and which are toxic to biological systems. This Pseudomonas putida (Arthrobacter siderocapsulatus) protein is Superoxide dismutase [Mn] (sodA).